A 494-amino-acid chain; its full sequence is Alpha-amylase 2 (494 aa).

Positions methionine 1–alanine 18 are cleaved as a signal peptide. A disulfide bond links cysteine 46 and cysteine 102. Asparagine 116, arginine 165, and aspartate 174 together coordinate Ca(2+). A disulfide bridge links cysteine 153 with cysteine 167. Arginine 202 is a binding site for chloride. Aspartate 204 functions as the Nucleophile in the catalytic mechanism. Histidine 208 lines the Ca(2+) pocket. Glutamate 241 acts as the Proton donor in catalysis. Chloride is bound by residues asparagine 304 and arginine 343. The disordered stretch occupies residues phenylalanine 350–phenylalanine 370. Low complexity predominate over residues threonine 351 to glutamine 363. 2 cysteine pairs are disulfide-bonded: cysteine 376–cysteine 382 and cysteine 448–cysteine 460.

The protein belongs to the glycosyl hydrolase 13 family. Monomer. It depends on Ca(2+) as a cofactor. Chloride is required as a cofactor.

The enzyme catalyses Endohydrolysis of (1-&gt;4)-alpha-D-glucosidic linkages in polysaccharides containing three or more (1-&gt;4)-alpha-linked D-glucose units.. This chain is Alpha-amylase 2 (Amy58), found in Drosophila ananassae (Fruit fly).